We begin with the raw amino-acid sequence, 433 residues long: Probable carboxypeptidase ATEG_02905 (433 aa).

The first 18 residues, 1–18 (MKSAISLLLASAATYVGA), serve as a signal peptide directing secretion. Positions 20 to 40 (PHPEPPQLVLSPSTSTGVHGD) are disordered. N-linked (GlcNAc...) asparagine glycosylation is present at asparagine 92. Aspartate 161 lines the Zn(2+) pocket. Glutamate 193 serves as the catalytic Proton acceptor. Glutamate 194 serves as a coordination point for Zn(2+).

The protein belongs to the peptidase M20A family. Zn(2+) serves as cofactor.

Its subcellular location is the secreted. This Aspergillus terreus (strain NIH 2624 / FGSC A1156) protein is Probable carboxypeptidase ATEG_02905.